A 170-amino-acid polypeptide reads, in one-letter code: RNA pyrophosphohydrolase (170 aa).

The 145-residue stretch at 6–150 (GFRPNVGIIL…KRDVYRRALR (145 aa)) folds into the Nudix hydrolase domain. The short motif at 39–60 (GGINAHESPEQALYRELHEEVG) is the Nudix box element.

It belongs to the Nudix hydrolase family. RppH subfamily. Requires a divalent metal cation as cofactor.

In terms of biological role, accelerates the degradation of transcripts by removing pyrophosphate from the 5'-end of triphosphorylated RNA, leading to a more labile monophosphorylated state that can stimulate subsequent ribonuclease cleavage. This Cellvibrio japonicus (strain Ueda107) (Pseudomonas fluorescens subsp. cellulosa) protein is RNA pyrophosphohydrolase.